We begin with the raw amino-acid sequence, 472 residues long: 3-isopropylmalate dehydratase large subunit (472 aa).

[4Fe-4S] cluster contacts are provided by Cys347, Cys407, and Cys410.

Belongs to the aconitase/IPM isomerase family. LeuC type 1 subfamily. In terms of assembly, heterodimer of LeuC and LeuD. The cofactor is [4Fe-4S] cluster.

The catalysed reaction is (2R,3S)-3-isopropylmalate = (2S)-2-isopropylmalate. It participates in amino-acid biosynthesis; L-leucine biosynthesis; L-leucine from 3-methyl-2-oxobutanoate: step 2/4. Functionally, catalyzes the isomerization between 2-isopropylmalate and 3-isopropylmalate, via the formation of 2-isopropylmaleate. This is 3-isopropylmalate dehydratase large subunit from Synechococcus sp. (strain CC9605).